The chain runs to 274 residues: Dermonecrotic toxin SdSicTox-betaIIB1bvii (274 aa).

His-5 is an active-site residue. Residues Glu-25 and Asp-27 each contribute to the Mg(2+) site. His-41 functions as the Nucleophile in the catalytic mechanism. 2 disulfide bridges follow: Cys-45–Cys-51 and Cys-47–Cys-190. Asp-85 lines the Mg(2+) pocket.

This sequence belongs to the arthropod phospholipase D family. Class II subfamily. It depends on Mg(2+) as a cofactor. Expressed by the venom gland.

The protein resides in the secreted. It catalyses the reaction an N-(acyl)-sphingosylphosphocholine = an N-(acyl)-sphingosyl-1,3-cyclic phosphate + choline. The enzyme catalyses an N-(acyl)-sphingosylphosphoethanolamine = an N-(acyl)-sphingosyl-1,3-cyclic phosphate + ethanolamine. It carries out the reaction a 1-acyl-sn-glycero-3-phosphocholine = a 1-acyl-sn-glycero-2,3-cyclic phosphate + choline. The catalysed reaction is a 1-acyl-sn-glycero-3-phosphoethanolamine = a 1-acyl-sn-glycero-2,3-cyclic phosphate + ethanolamine. Dermonecrotic toxins cleave the phosphodiester linkage between the phosphate and headgroup of certain phospholipids (sphingolipid and lysolipid substrates), forming an alcohol (often choline) and a cyclic phosphate. This toxin acts on sphingomyelin (SM). It may also act on ceramide phosphoethanolamine (CPE), lysophosphatidylcholine (LPC) and lysophosphatidylethanolamine (LPE), but not on lysophosphatidylserine (LPS), and lysophosphatidylglycerol (LPG). It acts by transphosphatidylation, releasing exclusively cyclic phosphate products as second products. Induces dermonecrosis, hemolysis, increased vascular permeability, edema, inflammatory response, and platelet aggregation. The protein is Dermonecrotic toxin SdSicTox-betaIIB1bvii of Sicarius cf. damarensis (strain GJB-2008) (Six-eyed sand spider).